Consider the following 171-residue polypeptide: SPbeta prophage-derived uncharacterized protein YokC (171 aa).

In Bacillus subtilis (strain 168), this protein is SPbeta prophage-derived uncharacterized protein YokC (yokC).